The primary structure comprises 664 residues: Chaperone protein dnaK1 (664 aa).

A Phosphothreonine; by autocatalysis modification is found at threonine 198.

The protein belongs to the heat shock protein 70 family.

Acts as a chaperone. In Prochlorococcus marinus (strain MIT 9313), this protein is Chaperone protein dnaK1 (dnaK1).